We begin with the raw amino-acid sequence, 452 residues long: 23S rRNA (uracil(1939)-C(5))-methyltransferase RlmD (452 aa).

Positions 1–25 are disordered; that stretch reads MSKKKSNSGLRFQPAGGNRTPQVPV. The 59-residue stretch at 22–80 folds into the TRAM domain; sequence QVPVGKKQRLDIERLAGDGRGIAFLDGRTWFVSGALAGEAVEARVLNARGKVVEARLER. Residues cysteine 93, cysteine 99, cysteine 102, and cysteine 181 each coordinate [4Fe-4S] cluster. Positions 285, 314, 319, 335, 362, and 383 each coordinate S-adenosyl-L-methionine. The Nucleophile role is filled by cysteine 409.

It belongs to the class I-like SAM-binding methyltransferase superfamily. RNA M5U methyltransferase family. RlmD subfamily.

The catalysed reaction is uridine(1939) in 23S rRNA + S-adenosyl-L-methionine = 5-methyluridine(1939) in 23S rRNA + S-adenosyl-L-homocysteine + H(+). Its function is as follows. Catalyzes the formation of 5-methyl-uridine at position 1939 (m5U1939) in 23S rRNA. This Pseudomonas putida (strain ATCC 47054 / DSM 6125 / CFBP 8728 / NCIMB 11950 / KT2440) protein is 23S rRNA (uracil(1939)-C(5))-methyltransferase RlmD.